We begin with the raw amino-acid sequence, 125 residues long: Small ribosomal subunit protein bS6 (125 aa).

Belongs to the bacterial ribosomal protein bS6 family.

Its function is as follows. Binds together with bS18 to 16S ribosomal RNA. This is Small ribosomal subunit protein bS6 from Campylobacter jejuni (strain RM1221).